The chain runs to 439 residues: Tol-Pal system protein TolB (439 aa).

The signal sequence occupies residues Met-1–Thr-22.

Belongs to the TolB family. The Tol-Pal system is composed of five core proteins: the inner membrane proteins TolA, TolQ and TolR, the periplasmic protein TolB and the outer membrane protein Pal. They form a network linking the inner and outer membranes and the peptidoglycan layer.

The protein localises to the periplasm. Its function is as follows. Part of the Tol-Pal system, which plays a role in outer membrane invagination during cell division and is important for maintaining outer membrane integrity. This Xylella fastidiosa (strain 9a5c) protein is Tol-Pal system protein TolB.